The sequence spans 368 residues: Glutamate 5-kinase (368 aa).

ATP is bound at residue lysine 13. Positions 54, 141, and 153 each coordinate substrate. Residue 173-174 participates in ATP binding; sequence SD. In terms of domain architecture, PUA spans 278-355; that stretch reads KGSLRLDAGA…DEIPEILGYP (78 aa).

Belongs to the glutamate 5-kinase family.

Its subcellular location is the cytoplasm. It carries out the reaction L-glutamate + ATP = L-glutamyl 5-phosphate + ADP. It functions in the pathway amino-acid biosynthesis; L-proline biosynthesis; L-glutamate 5-semialdehyde from L-glutamate: step 1/2. Its function is as follows. Catalyzes the transfer of a phosphate group to glutamate to form L-glutamate 5-phosphate. The protein is Glutamate 5-kinase of Jannaschia sp. (strain CCS1).